Reading from the N-terminus, the 149-residue chain is Large ribosomal subunit protein uL13 (149 aa).

The protein belongs to the universal ribosomal protein uL13 family. In terms of assembly, part of the 50S ribosomal subunit.

Its function is as follows. This protein is one of the early assembly proteins of the 50S ribosomal subunit, although it is not seen to bind rRNA by itself. It is important during the early stages of 50S assembly. In Cyanothece sp. (strain PCC 7425 / ATCC 29141), this protein is Large ribosomal subunit protein uL13.